The sequence spans 542 residues: Probable spastin homolog spas-1 (542 aa).

The stretch at 29–66 forms a coiled coil; the sequence is RAAIEMDELTKQNGTINEKLQTAELYKQARQMLKEANE. The tract at residues 131–177 is disordered; the sequence is ATVPGDKKVSKVKQTEKAPHVCSRGDRCGAHQPPPEKKSTPLKPVNQ. Basic and acidic residues predominate over residues 135–169; sequence GDKKVSKVKQTEKAPHVCSRGDRCGAHQPPPEKKS. Residue 309-316 participates in ATP binding; the sequence is GPPGNGKT.

It belongs to the AAA ATPase family. Spastin subfamily. In terms of assembly, homohexamer. The homohexamer is stabilized by ATP-binding. The homohexamer may adopt a ring conformation through which microtubules pass prior to being severed. Interacts with microtubules.

It localises to the cytoplasm. The protein localises to the cytoskeleton. It is found in the perinuclear region. It carries out the reaction n ATP + n H2O + a microtubule = n ADP + n phosphate + (n+1) alpha/beta tubulin heterodimers.. Its function is as follows. Severs microtubules, probably in an ATP-dependent fashion. In Caenorhabditis briggsae, this protein is Probable spastin homolog spas-1 (spas-1).